The following is a 1113-amino-acid chain: Lon protease homolog, mitochondrial (1113 aa).

The N-terminal 61 residues, 1–61 (MLRGQTLPWR…RAFSSSSIRR (61 aa)), are a transit peptide targeting the mitochondrion. Residues 42–196 (SRLHRSLPTS…SGEKALQKPS (155 aa)) form a disordered region. Composition is skewed to basic and acidic residues over residues 64-99 (KPPP…RKAA), 124-143 (KAGA…KDGN), and 178-192 (DGGK…EKAL). A Lon N-terminal domain is found at 204 to 456 (VMAIPIAKRP…KALVVLKKEL (253 aa)). Position 609–616 (609–616 (GPPGVGKT)) interacts with ATP. Residues 828 to 858 (LTDEGKAVQEESQKETESPDSKSPVDPEKST) are compositionally biased toward basic and acidic residues. The interval 828–864 (LTDEGKAVQEESQKETESPDSKSPVDPEKSTTETPRV) is disordered. In terms of domain architecture, Lon proteolytic spans 898 to 1084 (TFPPGVTMGL…SEVFDLLFTD (187 aa)). Residues Ser-990 and Lys-1033 contribute to the active site.

Belongs to the peptidase S16 family. As to quaternary structure, homohexamer or homoheptamer. Organized in a ring with a central cavity.

Its subcellular location is the mitochondrion matrix. It catalyses the reaction Hydrolysis of proteins in presence of ATP.. Functionally, ATP-dependent serine protease that mediates the selective degradation of misfolded, unassembled or oxidatively damaged polypeptides as well as certain short-lived regulatory proteins in the mitochondrial matrix. May also have a chaperone function in the assembly of inner membrane protein complexes. Participates in the regulation of mitochondrial gene expression and in the maintenance of the integrity of the mitochondrial genome. Binds to mitochondrial DNA in a site-specific manner. The sequence is that of Lon protease homolog, mitochondrial (pim1) from Aspergillus niger (strain ATCC MYA-4892 / CBS 513.88 / FGSC A1513).